Reading from the N-terminus, the 461-residue chain is tRNA modification GTPase MnmE (461 aa).

Positions 27, 89, and 128 each coordinate (6S)-5-formyl-5,6,7,8-tetrahydrofolate. The TrmE-type G domain maps to Gly-224 to Phe-382. Asn-234 lines the K(+) pocket. GTP contacts are provided by residues Asn-234–Ser-239, Thr-253–Thr-259, and Asp-278–Gly-281. Ser-238 lines the Mg(2+) pocket. K(+)-binding residues include Thr-253, Ile-255, and Thr-258. Thr-259 contacts Mg(2+). Lys-461 lines the (6S)-5-formyl-5,6,7,8-tetrahydrofolate pocket.

Belongs to the TRAFAC class TrmE-Era-EngA-EngB-Septin-like GTPase superfamily. TrmE GTPase family. As to quaternary structure, homodimer. Heterotetramer of two MnmE and two MnmG subunits. It depends on K(+) as a cofactor.

The protein resides in the cytoplasm. Exhibits a very high intrinsic GTPase hydrolysis rate. Involved in the addition of a carboxymethylaminomethyl (cmnm) group at the wobble position (U34) of certain tRNAs, forming tRNA-cmnm(5)s(2)U34. This chain is tRNA modification GTPase MnmE, found in Lactobacillus gasseri (strain ATCC 33323 / DSM 20243 / BCRC 14619 / CIP 102991 / JCM 1131 / KCTC 3163 / NCIMB 11718 / NCTC 13722 / AM63).